The sequence spans 544 residues: tRNA pseudouridine synthase 1 (544 aa).

Composition is skewed to basic and acidic residues over residues 1–10 (MSEENLRPAY) and 31–61 (RKAD…RLDE). Positions 1-74 (MSEENLRPAY…PLPKEPRLPK (74 aa)) are disordered. Residue D134 is the Nucleophile of the active site. The disordered stretch occupies residues 495 to 544 (IPGLTDAPESNKKIKQRKRMEEEEAASKKAEISSTTQSNEPEVQPEAAAN). Over residues 513–525 (RMEEEEAASKKAE) the composition is skewed to basic and acidic residues.

This sequence belongs to the tRNA pseudouridine synthase TruA family. It depends on Zn(2+) as a cofactor.

The protein localises to the nucleus. The enzyme catalyses a uridine in tRNA = a pseudouridine in tRNA. It catalyses the reaction uridine in snRNA = pseudouridine in snRNA. The catalysed reaction is a uridine in mRNA = a pseudouridine in mRNA. Functionally, formation of pseudouridine at positions 27 and 28 in the anticodon stem and loop of transfer RNAs; at positions 34 and 36 of intron-containing precursor tRNA(Ile) and at position 35 in the intron-containing tRNA(Tyr). Catalyzes pseudouridylation at position 44 in U2 snRNA. Also catalyzes pseudouridylation of mRNAs. In Saccharomyces cerevisiae (strain ATCC 204508 / S288c) (Baker's yeast), this protein is tRNA pseudouridine synthase 1 (PUS1).